Here is a 358-residue protein sequence, read N- to C-terminus: Magnesium-protoporphyrin IX monomethyl ester [oxidative] cyclase 3 (358 aa).

It belongs to the AcsF family. It depends on Fe cation as a cofactor.

The enzyme catalyses Mg-protoporphyrin IX 13-monomethyl ester + 3 NADPH + 3 O2 + 2 H(+) = 3,8-divinyl protochlorophyllide a + 3 NADP(+) + 5 H2O. Its pathway is porphyrin-containing compound metabolism; chlorophyll biosynthesis (light-independent). In terms of biological role, catalyzes the formation of the isocyclic ring in chlorophyll biosynthesis. Mediates the cyclase reaction, which results in the formation of divinylprotochlorophyllide (Pchlide) characteristic of all chlorophylls from magnesium-protoporphyrin IX 13-monomethyl ester (MgPMME). The protein is Magnesium-protoporphyrin IX monomethyl ester [oxidative] cyclase 3 of Nostoc sp. (strain PCC 7120 / SAG 25.82 / UTEX 2576).